Consider the following 143-residue polypeptide: NADH-quinone oxidoreductase subunit A (143 aa).

3 consecutive transmembrane segments (helical) span residues 8-28, 63-83, and 90-110; these read FGNV…GYLT, FYVV…LYPW, and LGVF…LGLV.

Belongs to the complex I subunit 3 family. In terms of assembly, NDH-1 is composed of 14 different subunits. Subunits NuoA, H, J, K, L, M, N constitute the membrane sector of the complex.

The protein resides in the cell inner membrane. It carries out the reaction a quinone + NADH + 5 H(+)(in) = a quinol + NAD(+) + 4 H(+)(out). Its function is as follows. NDH-1 shuttles electrons from NADH, via FMN and iron-sulfur (Fe-S) centers, to quinones in the respiratory chain. The immediate electron acceptor for the enzyme in this species is believed to be a menaquinone. Couples the redox reaction to proton translocation (for every two electrons transferred, four hydrogen ions are translocated across the cytoplasmic membrane), and thus conserves the redox energy in a proton gradient. This chain is NADH-quinone oxidoreductase subunit A, found in Chlorobium phaeobacteroides (strain DSM 266 / SMG 266 / 2430).